The following is a 493-amino-acid chain: Beta-amyrin 11-oxidase (493 aa).

Residues 7–23 (CMSAATLLVCYIFGSKF) form a helical membrane-spanning segment. Cys-439 is a heme binding site.

It belongs to the cytochrome P450 family. Heme serves as cofactor. In terms of tissue distribution, expressed in roots and stolons. Not detected in leaves and stems.

The protein localises to the membrane. It catalyses the reaction beta-amyrin + 2 reduced [NADPH--hemoprotein reductase] + 2 O2 = 11-oxo-beta-amyrin + 2 oxidized [NADPH--hemoprotein reductase] + 3 H2O + 2 H(+). It carries out the reaction beta-amyrin + reduced [NADPH--hemoprotein reductase] + O2 = 11alpha-hydroxy-beta-amyrin + oxidized [NADPH--hemoprotein reductase] + H2O + H(+). The catalysed reaction is 11alpha-hydroxy-beta-amyrin + reduced [NADPH--hemoprotein reductase] + O2 = 11-oxo-beta-amyrin + oxidized [NADPH--hemoprotein reductase] + 2 H2O + H(+). Its function is as follows. Involved in the biosynthesis of Glycyrrhetinic acid (GA), a natural product which exhibits anti-inflammatory activity. Catalyzes 2 successive oxidations of beta-amyrin, producing a precursor of the triterpene sweetener glycyrrhizin. Unable to use 11-deoxoglycyrrhetinic acid or ent-kaurenoic acid as substrates. This Glycyrrhiza uralensis (Chinese licorice) protein is Beta-amyrin 11-oxidase.